The primary structure comprises 224 residues: Urease accessory protein UreF (224 aa).

It belongs to the UreF family. UreD, UreF and UreG form a complex that acts as a GTP-hydrolysis-dependent molecular chaperone, activating the urease apoprotein by helping to assemble the nickel containing metallocenter of UreC. The UreE protein probably delivers the nickel.

The protein localises to the cytoplasm. Its function is as follows. Required for maturation of urease via the functional incorporation of the urease nickel metallocenter. The protein is Urease accessory protein UreF of Enterobacter sp. (strain 638).